A 947-amino-acid chain; its full sequence is Valine--tRNA ligase (947 aa).

The 'HIGH' region motif lies at 45–55 (PNVTGSLHMGH). Residues 591–595 (KMSKS) carry the 'KMSKS' region motif. Lysine 594 contacts ATP. Residues 879-943 (DLAAEQARLE…ASLRTALTRV (65 aa)) adopt a coiled-coil conformation.

The protein belongs to the class-I aminoacyl-tRNA synthetase family. ValS type 1 subfamily. Monomer.

It localises to the cytoplasm. The enzyme catalyses tRNA(Val) + L-valine + ATP = L-valyl-tRNA(Val) + AMP + diphosphate. In terms of biological role, catalyzes the attachment of valine to tRNA(Val). As ValRS can inadvertently accommodate and process structurally similar amino acids such as threonine, to avoid such errors, it has a 'posttransfer' editing activity that hydrolyzes mischarged Thr-tRNA(Val) in a tRNA-dependent manner. The chain is Valine--tRNA ligase from Agrobacterium fabrum (strain C58 / ATCC 33970) (Agrobacterium tumefaciens (strain C58)).